The primary structure comprises 653 residues: Fructose-1,6-bisphosphatase class 3 (653 aa).

Belongs to the FBPase class 3 family. It depends on Mn(2+) as a cofactor.

The catalysed reaction is beta-D-fructose 1,6-bisphosphate + H2O = beta-D-fructose 6-phosphate + phosphate. It participates in carbohydrate biosynthesis; gluconeogenesis. The polypeptide is Fructose-1,6-bisphosphatase class 3 (Listeria monocytogenes serotype 4b (strain CLIP80459)).